The sequence spans 566 residues: UvrABC system protein C (566 aa).

In terms of domain architecture, GIY-YIG spans 16–93 (EKPGVYLFKK…IQQYKPRYNV (78 aa)). Residues 199-234 (AEVLPKLYEKIEEFSKELMFEKCAHIRDQIIALENL) enclose the UVR domain.

This sequence belongs to the UvrC family. In terms of assembly, interacts with UvrB in an incision complex.

Its subcellular location is the cytoplasm. Its function is as follows. The UvrABC repair system catalyzes the recognition and processing of DNA lesions. UvrC both incises the 5' and 3' sides of the lesion. The N-terminal half is responsible for the 3' incision and the C-terminal half is responsible for the 5' incision. The chain is UvrABC system protein C from Aquifex aeolicus (strain VF5).